Consider the following 510-residue polypeptide: NAD(P)H-quinone oxidoreductase subunit 2, chloroplastic (510 aa).

Transmembrane regions (helical) follow at residues 24-44 (LLLF…GLIL), 59-79 (WFYF…LFRW), 99-119 (IFQF…VEYI), 124-144 (MAIT…MFLC), 149-169 (XITI…LSGY), 183-203 (YLLM…WLYG), 229-249 (ISIA…PAPF), 295-315 (WHLL…LIAI), 323-343 (MLAY…IVGD), 347-367 (GYAS…GTFA), 395-415 (ALSS…AGFF), 418-438 (LHLF…IGLL), and 484-504 (MTVC…ILAI).

This sequence belongs to the complex I subunit 2 family. NDH is composed of at least 16 different subunits, 5 of which are encoded in the nucleus.

Its subcellular location is the plastid. The protein localises to the chloroplast thylakoid membrane. It catalyses the reaction a plastoquinone + NADH + (n+1) H(+)(in) = a plastoquinol + NAD(+) + n H(+)(out). It carries out the reaction a plastoquinone + NADPH + (n+1) H(+)(in) = a plastoquinol + NADP(+) + n H(+)(out). Functionally, NDH shuttles electrons from NAD(P)H:plastoquinone, via FMN and iron-sulfur (Fe-S) centers, to quinones in the photosynthetic chain and possibly in a chloroplast respiratory chain. The immediate electron acceptor for the enzyme in this species is believed to be plastoquinone. Couples the redox reaction to proton translocation, and thus conserves the redox energy in a proton gradient. The chain is NAD(P)H-quinone oxidoreductase subunit 2, chloroplastic from Narcissus elegans (Daffodil).